Here is a 281-residue protein sequence, read N- to C-terminus: DegV domain-containing protein spr0652 (281 aa).

One can recognise a DegV domain in the interval 3-280 (WKIIADSGCD…EGGLLMGYEI (278 aa)). Hexadecanoate is bound by residues S63 and S91.

May bind long-chain fatty acids, such as palmitate, and may play a role in lipid transport or fatty acid metabolism. The chain is DegV domain-containing protein spr0652 from Streptococcus pneumoniae (strain ATCC BAA-255 / R6).